We begin with the raw amino-acid sequence, 838 residues long: Rho GTPase-activating protein 12 (838 aa).

Residues 10-72 (AGQAYIEVEY…PAQYVKEVTR (63 aa)) form the SH3 domain. Polar residues-rich tracts occupy residues 155–172 (GKFN…QNRT) and 189–198 (TSFSQEQSCD). A disordered region spans residues 155–239 (GKFNSDSHSP…PPNQGRPDSP (85 aa)). Residue Ser-163 is modified to Phosphoserine. A phosphoserine mark is found at Ser-199, Ser-211, and Ser-213. Phosphothreonine occurs at positions 228 and 229. Ser-238 bears the Phosphoserine mark. At Tyr-241 the chain carries Phosphotyrosine. Residues 263 to 296 (IQVNGEWETHKDSSGRCYYYNRTTQERTWKPPRW) form the WW 1 domain. Basic and acidic residues predominate over residues 291 to 302 (WKPPRWARDVST). The tract at residues 291 to 346 (WKPPRWARDVSTSRDFQSPGEQEPLSSEENYHSSCFSQSDSQCGSPPRGWSEELDE) is disordered. Residues 303-334 (SRDFQSPGEQEPLSSEENYHSSCFSQSDSQCG) are compositionally biased toward polar residues. The WW 2 domain occupies 355–388 (DYTKEKWLKHVDDQGRQYYYSADGSRSEWELPKY). The segment at 425 to 456 (DSNDKDSPTTTKLCLPENESPPTSSKHQDPGQ) is disordered. The PH domain maps to 466–567 (KITENGKKVR…WFKVLSSTIN (102 aa)). Residues 572 to 582 (EADEAAEEETP) show a composition bias toward acidic residues. The segment at 572–620 (EADEAAEEETPDSPGVEKHDKEKDQKELKKLRSMKGSSMDSSEQKKTKK) is disordered. Ser-584 carries the phosphoserine modification. Basic and acidic residues predominate over residues 586–601 (GVEKHDKEKDQKELKK). In terms of domain architecture, Rho-GAP spans 648–836 (SNLANLCQRE…LILLELSTVF (189 aa)).

In terms of biological role, GTPase activator for the Rho-type GTPases by converting them to an inactive GDP-bound state. This chain is Rho GTPase-activating protein 12 (Arhgap12), found in Mus musculus (Mouse).